Here is a 28-residue protein sequence, read N- to C-terminus: trp operon leader peptide (28 aa).

Functionally, this protein is involved in control of the biosynthesis of tryptophan. The polypeptide is trp operon leader peptide (trpL) (Serratia marcescens).